A 356-amino-acid chain; its full sequence is MKQKPIDDELKYLDERSRDIFRHIVEAYLNDGEPVGSRNLSRLLRQTLSPATIRNVMSDLEHLGLIYAPHVSAGRMPTQSGLRFFVDAFMEAGDLPNEERESIEAQVKEAGHAQSVEHFLVQASQILSDLSRGAGLVLASKYEGTLKHIEFVRLDGQQALAVLVTQQGEVENRIVHLPKGVTHAQLTEATNFLNAHIQGRTLSEAKEEIARLCSETRAALDHLSHHLVETGLALWGGEDADHKIHLIVRGRSNLLEDVKAEEDLERLRHLFDDLETRESMAQLLDLTDEGPGVRIFIGSENKLFSLSGSSLVVAPYRDSQQRVIGALGVIGPTRLNYARIVPMVNYTAQLVSQLLR.

This sequence belongs to the HrcA family.

In terms of biological role, negative regulator of class I heat shock genes (grpE-dnaK-dnaJ and groELS operons). Prevents heat-shock induction of these operons. The polypeptide is Heat-inducible transcription repressor HrcA (Bartonella quintana (strain Toulouse) (Rochalimaea quintana)).